Consider the following 150-residue polypeptide: Protein A151R (150 aa).

It belongs to the asfivirus A151R family. In terms of assembly, monomer. Homodimer. Interacts with protein B119L. Interacts with membrane protein E248R. Zn(2+) is required as a cofactor.

May participate in a redox cascade for the formation of disulfide bonds in viral proteins. In African swine fever virus (isolate Pig/Kenya/KEN-50/1950) (ASFV), this protein is Protein A151R.